A 322-amino-acid polypeptide reads, in one-letter code: MKTSLPIVVLLTAVISGVHPNPTPKSCTVSEEDLTTIRNAIQKASRASLDDVNLDEDLIAKCPLLKTITASLKSVASEIATLKDTGISEEQVDELKQSYEQQVNEIVKSRDIFEKQSGGDVMKEQGAMINRMTELQVQVAQLQQQIGEQTSRMYDDMAELIFQRLAMNSTDSIRNYTAHMMEQKLHTLMTKLETNYRIFLGALRYLDHLGDQPLIDKVFDGILKRLDEMSLETNKERENGKYVLVNLLCWTVNNRFLTEKYRKKQLELFRIALKFYPKTGNKEANEADIRGRQFCDANFPVNVITWFAVSRAAEGWGLRGTL.

A signal peptide spans 1-20 (MKTSLPIVVLLTAVISGVHP). Cys27 and Cys62 are disulfide-bonded. 2 N-linked (GlcNAc...) asparagine glycosylation sites follow: Asn168 and Asn175. A disulfide bridge links Cys249 with Cys295.

Monomer in solution. Interacts (via the N-terminal domain) with cuticular protein Cp19 (via the C-terminus). Post-translationally, proteolytically cleaved by human mast cell tryptase and chymase. Glycosylated. In terms of tissue distribution, female salivary gland (at protein level). Female saliva (at protein level).

It localises to the secreted. In terms of biological role, salivary protein that promotes mosquito blood feeding on the vertebrate host by inducing morphological changes in the mosquito labrum. Interacts with the mosquito labrum end tip and triggers salivation and probing. Modulates enzymatic activities of human tryptase and chymase. The sequence is that of Labrum-interacting protein from saliva LIPS-2 from Aedes albopictus (Asian tiger mosquito).